The following is a 776-amino-acid chain: MTISADQVNQIAWNHHHDPFQVLGSHQIELSGKTMTVIRAYQPSAEAVSVISPIDRKEYPMQSVHNPHFFECVINTPKLANYQLKIKEGEHERVIHDPYAFRSAKLTEFDLQLFGEGNHHRIYEKLGAHITEVDGIKGVYFAVWAPNARNVSILGNFNYWDGRKHQMRKGHTGVWELFIPDIGPGESYKYEVKNWEGHIYEKSDPYGYQQEVRPKTASIVVDLDSYTWNDQEWMEKRRHTDPLTQPISVYECHFGSWIHASAHEPAKLPNGETEPVVQVSELRPDARFLTYRELADRLVSYVKDLGYTHIEMLPVAEHPFDGSWGYQVTGFFAPTSRYGSAQDFMYFVDKCHENGIGVIVDWVPGHFPKDGHGLAFFDGTHLYEHPDPRKGEHKQWGTLVFDYGRNEVRNFLAANALFWFDKYHIDGVRVDAVASMVYHNYMRPDGEWVANKYGGVEYIEAADFLRQVNHLLFSYYPGVLSIAEESTSWPMVTWPTYVGGLGFNFKWNMGWMHDMLDYFEMDPWFRQFHQNNVTFSIWYHHTENYMLALSHDEVVHCKSSILGKMPGDNWQKFANVRALFAYMFTHPGKKTMFMGMELPQWGEWDVWGDLEWHLLEFDAHQGMKRFFRDLNHLYCSEPALYEQDCNEGGFEWIDCNDNNHSVVSFIRRAKDGKDFVVTVCNFTPQPHSHYRVGVPEPGFYTEIFNSDAGNYGGSNMGNLGGKWTDDWFFHDYQQSLDLCLPPLGVVVFQLDKKKTIAMIQESEDVETVEAKAKNAS.

Asp-431 acts as the Nucleophile in catalysis. The active-site Proton donor is the Glu-484.

The protein belongs to the glycosyl hydrolase 13 family. GlgB subfamily. Monomer.

It carries out the reaction Transfers a segment of a (1-&gt;4)-alpha-D-glucan chain to a primary hydroxy group in a similar glucan chain.. It functions in the pathway glycan biosynthesis; glycogen biosynthesis. Functionally, catalyzes the formation of the alpha-1,6-glucosidic linkages in glycogen by scission of a 1,4-alpha-linked oligosaccharide from growing alpha-1,4-glucan chains and the subsequent attachment of the oligosaccharide to the alpha-1,6 position. This chain is 1,4-alpha-glucan branching enzyme GlgB, found in Trichodesmium erythraeum (strain IMS101).